Consider the following 343-residue polypeptide: Fanconi anemia group F protein (343 aa).

In terms of assembly, belongs to the multisubunit FA complex composed of FANCA, FANCB, FANCC, FANCE, FANCF, FANCG, FANCL/PHF9 and FANCM. In complex with FANCA, FANCG and FANCL, but not with FANCC, nor FANCE, interacts with HES1; this interaction may be essential for the stability and nuclear localization of FA core complex proteins.

The protein localises to the nucleus. In terms of biological role, DNA repair protein that may operate in a postreplication repair or a cell cycle checkpoint function. May be implicated in interstrand DNA cross-link repair and in the maintenance of normal chromosome stability. The polypeptide is Fanconi anemia group F protein (Mus musculus (Mouse)).